The chain runs to 182 residues: Autophagy-related protein 31 (182 aa).

Residues Leu105–Glu134 form a disordered region.

Its subcellular location is the cytoplasm. The protein localises to the cytoskeleton. It localises to the preautophagosomal structure. Its function is as follows. Plays a role in starvation-induced autophagy. Involved in mitophagy. Functions with ATG17 and ATG29 at the preautophagosomal structure (PAS) in order to form normal autophagosomes under starvation conditions. May be involved in microtubule function, such as chromosome segregation and karyogamy. This Candida glabrata (strain ATCC 2001 / BCRC 20586 / JCM 3761 / NBRC 0622 / NRRL Y-65 / CBS 138) (Yeast) protein is Autophagy-related protein 31 (CIS1).